The sequence spans 222 residues: Small ribosomal subunit protein uS3 (222 aa).

The KH type-2 domain maps to 39–108; sequence IRRHIKEKLY…TISLDIKEIK (70 aa).

It belongs to the universal ribosomal protein uS3 family. As to quaternary structure, part of the 30S ribosomal subunit. Forms a tight complex with proteins S10 and S14.

Functionally, binds the lower part of the 30S subunit head. Binds mRNA in the 70S ribosome, positioning it for translation. In Caldicellulosiruptor bescii (strain ATCC BAA-1888 / DSM 6725 / KCTC 15123 / Z-1320) (Anaerocellum thermophilum), this protein is Small ribosomal subunit protein uS3.